A 460-amino-acid chain; its full sequence is MEIDLEKFKRIHFIGIGGISMSGLAHILLEEGHTITGSDIKNSHLIERLEKEGAKINIPHMAESVIGADLVVYTAAIHDDNVEYQKAKELGIPIIDRATLLGLIMKKYKFGVAVAGSHGKTTTTSLISVILDRAGYDPTVLVGGEIDAIGGNVRVGKSEYFVTEACEYTDSFLKFYPYIAVILNVDSDHLDYFKNIDNIKQSFRQFASLVPSDGFVVACKDDANTMHVIKGLEKNIVTYGINEKSDWQAKDITYDEKGCASFNVYYRGKFIGHFKLSIPGKHNIYNALASLAVTYLLGVDTEKAKEYIKEFKGTHRRFEVKGVVEGVTVVDDYAHHPAEIHATLEAAKNYPHKRIIAIFQPHTYSRTKALLSDFAESFDAADKIIITDIYAAREKDTGIVSSKDLVDLIFKRGKDVLYIKDFDSIVEYLKENTEEGDLVLTIGAGNIYEVGEKFLEENKK.

116–122 (GSHGKTT) contributes to the ATP binding site.

Belongs to the MurCDEF family.

It is found in the cytoplasm. It carries out the reaction UDP-N-acetyl-alpha-D-muramate + L-alanine + ATP = UDP-N-acetyl-alpha-D-muramoyl-L-alanine + ADP + phosphate + H(+). It participates in cell wall biogenesis; peptidoglycan biosynthesis. Cell wall formation. In Caldanaerobacter subterraneus subsp. tengcongensis (strain DSM 15242 / JCM 11007 / NBRC 100824 / MB4) (Thermoanaerobacter tengcongensis), this protein is UDP-N-acetylmuramate--L-alanine ligase.